A 405-amino-acid chain; its full sequence is Dynactin subunit 2 (405 aa).

The segment at 1–24 (MADPKYANLPGIASNEPDVYETSD) is disordered. Coiled-coil stretches lie at residues 102-125 (QQKYQRLVNEIHELCQDVEKIQTS) and 379-405 (QQTMKENLLAVEENFSALDQRMKKLNK).

This sequence belongs to the dynactin subunit 2 family. As to quaternary structure, subunit of dynactin, a multiprotein complex part of a tripartite complex with dynein and a adapter, such as BICDL1, BICD2 or HOOK3. The dynactin complex is built around ACTR1A/ACTB filament and consists of an actin-related filament composed of a shoulder domain, a pointed end and a barbed end. Its length is defined by its flexible shoulder domain. The soulder is composed of 2 DCTN1 subunits, 4 DCTN2 and 2 DCTN3.

It localises to the cytoplasm. Its subcellular location is the cytoskeleton. It is found in the microtubule organizing center. The protein resides in the centrosome. The protein localises to the membrane. Functionally, part of the dynactin complex that activates the molecular motor dynein for ultra-processive transport along microtubules. In the dynactin soulder domain, binds the ACTR1A filament and acts as a molecular ruler to determine the length. Modulates cytoplasmic dynein binding to an organelle, and plays a role in prometaphase chromosome alignment and spindle organization during mitosis. Involved in anchoring microtubules to centrosomes. The protein is Dynactin subunit 2 (dctn2) of Danio rerio (Zebrafish).